Consider the following 966-residue polypeptide: Collagen alpha-1(I) chain (966 aa).

The tract at residues 1-966 is disordered; sequence SYGYDEKSAG…PGPPGPPGPP (966 aa). Lysine 7 carries the allysine modification. Serine 8 carries the post-translational modification Phosphoserine. 4-hydroxyproline occurs at positions 27, 30, 32, 41, 44, 47, 61, 76, 82, 91, and 97. A compositionally biased stretch (basic and acidic residues) spans 64–78; it reads NGDDGEAGKPGRPGE. The residue at position 100 (lysine 100) is a 5-hydroxylysine; alternate. Residue lysine 100 is glycosylated (O-linked (Gal...) hydroxylysine; alternate). Position 106 is a phosphoserine (serine 106). The span at 114–130 shows a compositional bias: low complexity; it reads DAGPAGPKGEPGSPGEN. 16 positions are modified to 4-hydroxyproline: proline 124, proline 127, proline 133, proline 142, proline 148, proline 169, proline 178, proline 181, proline 208, proline 211, proline 223, proline 229, proline 238, proline 244, proline 247, and proline 262. Low complexity predominate over residues 148 to 166; that stretch reads PGASGPAGARGNDGATGAA. A compositionally biased stretch (pro residues) spans 168 to 180; that stretch reads PPGPTGPAGPPGF. Low complexity predominate over residues 214–253; that stretch reads AGAAGPAGNPGADGQPGAKGANGAPGIAGAPGFPGARGPS. Lysine 265 carries the post-translational modification 5-hydroxylysine. Residues proline 271, proline 274, proline 286, proline 295, proline 310, proline 316, proline 325, and proline 331 each carry the 4-hydroxyproline modification. Residues 320–329 show a composition bias toward gly residues; that stretch reads GERGGPGSRG. Lysine 340 carries the post-translational modification 5-hydroxylysine. 27 positions are modified to 4-hydroxyproline: proline 349, proline 358, proline 364, proline 370, proline 379, proline 382, proline 391, proline 400, proline 406, proline 418, proline 427, proline 436, proline 439, proline 457, proline 475, proline 481, proline 487, proline 493, proline 499, proline 505, proline 517, proline 526, proline 538, proline 542, proline 548, proline 554, and proline 563. Residues 373 to 399 show a composition bias toward low complexity; the sequence is KGLTGSPGSPGPDGKTGPPGPAGQDGR. The segment covering 408–427 has biased composition (low complexity); the sequence is ARGQAGVMGFPGPKGAAGEP. Positions 469–496 are enriched in low complexity; that stretch reads QGPAGSPGFQGLPGPAGPPGEAGKPGEQ. Lysine 575 carries the post-translational modification 5-hydroxylysine. Proline 581, proline 596, and proline 602 each carry 4-hydroxyproline. The segment covering 608 to 622 has biased composition (low complexity); it reads SGPSGPAGPTGARGA. Phosphoserine is present on serine 611. 4-hydroxyproline is present on residues proline 623, proline 629, proline 632, proline 641, proline 647, proline 665, proline 674, and proline 683. Residues 635–662 show a composition bias toward low complexity; it reads AGFAGPPGADGQPGAKGEPGDAGAKGDA. A compositionally biased stretch (pro residues) spans 664 to 676; sequence PPGPAGPTGPPGP. 5-hydroxylysine is present on lysine 686. The segment covering 691 to 707 has biased composition (low complexity); it reads SAGPPGATGFPGAAGRV. 4-hydroxyproline occurs at positions 695 and 701. Residue proline 709 is modified to 3-hydroxyproline. 14 positions are modified to 4-hydroxyproline: proline 710, proline 719, proline 722, proline 746, proline 755, proline 773, proline 782, proline 785, proline 791, proline 806, proline 812, proline 818, proline 826, and proline 832. The segment covering 736–755 has biased composition (low complexity); sequence ETGPAGEKGSPGADGPAGAP. Pro residues predominate over residues 805–815; the sequence is PPGPVGPPGLA. Residues 824-835 are compositionally biased toward gly residues; the sequence is EGPGAEGSPGRG. Residues 852–866 show a composition bias toward low complexity; it reads AGPAGARGPAGPQGP. Positions 867–881 are enriched in basic and acidic residues; the sequence is RGDKGETGEQGDRGI. Position 870 is a 5-hydroxylysine (lysine 870). Lysine 882 carries the post-translational modification 5-hydroxylysine; alternate. O-linked (Gal...) hydroxylysine; alternate glycosylation occurs at lysine 882. 4-hydroxyproline is present on residues proline 897, proline 900, proline 918, and proline 933. Low complexity predominate over residues 900 to 933; sequence PGEQGPSGASGPAGPRGPPGSAGSPGKDGLNGLP. Proline 938 is modified (3-hydroxyproline). Proline 939 is modified (4-hydroxyproline). Residues 951–966 show a composition bias toward pro residues; sequence VGPPGPPGPPGPPGPP. Proline 953 carries the 3-hydroxyproline modification. Proline 954 carries the post-translational modification 4-hydroxyproline. Proline 956 is modified (3-hydroxyproline). Proline 957 carries the 4-hydroxyproline modification. A 3-hydroxyproline modification is found at proline 959. 4-hydroxyproline is present on residues proline 960, proline 963, and proline 966.

This sequence belongs to the fibrillar collagen family. As to quaternary structure, trimers of one alpha 2(I) and two alpha 1(I) chains. In terms of processing, contains mostly 4-hydroxyproline. Proline residues at the third position of the tripeptide repeating unit (G-X-Y) are hydroxylated in some or all of the chains. Contains 3-hydroxyproline at a few sites. This modification occurs on the first proline residue in the sequence motif Gly-Pro-Hyp, where Hyp is 4-hydroxyproline. Post-translationally, lysine residues at the third position of the tripeptide repeating unit (G-X-Y) are 5-hydroxylated in some or all of the chains. In terms of processing, O-glycosylated on hydroxylated lysine residues. The O-linked glycan consists of a Glc-Gal disaccharide. As to expression, expressed in bones.

Its subcellular location is the secreted. The protein resides in the extracellular space. It localises to the extracellular matrix. Type I collagen is a member of group I collagen (fibrillar forming collagen). The chain is Collagen alpha-1(I) chain from Bradypus variegatus (Brown-throated three-fingered sloth).